The sequence spans 204 residues: Thiamine-phosphate synthase (204 aa).

4-amino-2-methyl-5-(diphosphooxymethyl)pyrimidine is bound by residues 34–38 (QYRDK) and Asp-66. Residues Asp-67 and Asp-86 each contribute to the Mg(2+) site. Ser-104 contacts 4-amino-2-methyl-5-(diphosphooxymethyl)pyrimidine. 2-[(2R,5Z)-2-carboxy-4-methylthiazol-5(2H)-ylidene]ethyl phosphate is bound at residue 131 to 133 (TST). Position 134 (Lys-134) interacts with 4-amino-2-methyl-5-(diphosphooxymethyl)pyrimidine. 2-[(2R,5Z)-2-carboxy-4-methylthiazol-5(2H)-ylidene]ethyl phosphate contacts are provided by residues Gly-160 and 180–181 (VS).

It belongs to the thiamine-phosphate synthase family. Requires Mg(2+) as cofactor.

It catalyses the reaction 2-[(2R,5Z)-2-carboxy-4-methylthiazol-5(2H)-ylidene]ethyl phosphate + 4-amino-2-methyl-5-(diphosphooxymethyl)pyrimidine + 2 H(+) = thiamine phosphate + CO2 + diphosphate. The catalysed reaction is 2-(2-carboxy-4-methylthiazol-5-yl)ethyl phosphate + 4-amino-2-methyl-5-(diphosphooxymethyl)pyrimidine + 2 H(+) = thiamine phosphate + CO2 + diphosphate. The enzyme catalyses 4-methyl-5-(2-phosphooxyethyl)-thiazole + 4-amino-2-methyl-5-(diphosphooxymethyl)pyrimidine + H(+) = thiamine phosphate + diphosphate. It functions in the pathway cofactor biosynthesis; thiamine diphosphate biosynthesis; thiamine phosphate from 4-amino-2-methyl-5-diphosphomethylpyrimidine and 4-methyl-5-(2-phosphoethyl)-thiazole: step 1/1. Condenses 4-methyl-5-(beta-hydroxyethyl)thiazole monophosphate (THZ-P) and 2-methyl-4-amino-5-hydroxymethyl pyrimidine pyrophosphate (HMP-PP) to form thiamine monophosphate (TMP). This is Thiamine-phosphate synthase from Picrophilus torridus (strain ATCC 700027 / DSM 9790 / JCM 10055 / NBRC 100828 / KAW 2/3).